We begin with the raw amino-acid sequence, 396 residues long: S-adenosylmethionine synthase (396 aa).

Histidine 16 contributes to the ATP binding site. Mg(2+) is bound at residue aspartate 18. Glutamate 44 is a K(+) binding site. Glutamate 57 and glutamine 100 together coordinate L-methionine. Residues 100–110 are flexible loop; that stretch reads QSVDIAQGVDR. ATP contacts are provided by residues 165-167, aspartate 240, 246-247, alanine 263, and lysine 267; these read DAK and RK. Aspartate 240 is an L-methionine binding site. Lysine 271 is an L-methionine binding site.

Belongs to the AdoMet synthase family. Homotetramer; dimer of dimers. It depends on Mg(2+) as a cofactor. K(+) serves as cofactor.

It localises to the cytoplasm. It catalyses the reaction L-methionine + ATP + H2O = S-adenosyl-L-methionine + phosphate + diphosphate. Its pathway is amino-acid biosynthesis; S-adenosyl-L-methionine biosynthesis; S-adenosyl-L-methionine from L-methionine: step 1/1. In terms of biological role, catalyzes the formation of S-adenosylmethionine (AdoMet) from methionine and ATP. The overall synthetic reaction is composed of two sequential steps, AdoMet formation and the subsequent tripolyphosphate hydrolysis which occurs prior to release of AdoMet from the enzyme. The polypeptide is S-adenosylmethionine synthase (Stutzerimonas stutzeri (strain A1501) (Pseudomonas stutzeri)).